A 179-amino-acid chain; its full sequence is MARLKDKFSNEIAPALQQKFNYKNVMQIPKLEKVVINVGVGEAIQNSKAIDAAVGDLSKITGQKPVVTRAKKSIAAFKLRTGMPIGTKVTLRGDRMYEFVDRLMNVALPRVRDFHGVSDKAFDGRGNYTLGIKEQLIFPEIEYDKIDKVRGMDIIFVTTAKTDEEARELLGMLGMPFRK.

Belongs to the universal ribosomal protein uL5 family. In terms of assembly, part of the 50S ribosomal subunit; part of the 5S rRNA/L5/L18/L25 subcomplex. Contacts the 5S rRNA and the P site tRNA. Forms a bridge to the 30S subunit in the 70S ribosome.

Its function is as follows. This is one of the proteins that bind and probably mediate the attachment of the 5S RNA into the large ribosomal subunit, where it forms part of the central protuberance. In the 70S ribosome it contacts protein S13 of the 30S subunit (bridge B1b), connecting the 2 subunits; this bridge is implicated in subunit movement. Contacts the P site tRNA; the 5S rRNA and some of its associated proteins might help stabilize positioning of ribosome-bound tRNAs. The sequence is that of Large ribosomal subunit protein uL5 from Desulfitobacterium hafniense (strain Y51).